Reading from the N-terminus, the 892-residue chain is Integrator complex subunit 6 (892 aa).

The 225-residue stretch at 3-227 (ILLFLIDTSA…QCLESLVQKV (225 aa)) folds into the VWFA domain. Positions 630 to 637 (MMIDEADE) match the Inhibitory loop motif. Disordered regions lie at residues 665-692 (MSPLLRRPQTPPIITNHVLGKGPTGTQG), 711-754 (VGGT…AAPD), and 771-793 (PDHTQNCEELSPPGQEGEMEVNE).

This sequence belongs to the Integrator subunit 6 family. In terms of assembly, component of the Integrator complex, composed of core subunits INTS1, INTS2, INTS3, INTS4, INTS5, INTS6, INTS7, INTS8, INTS9/RC74, INTS10, INTS11/CPSF3L, INTS12, INTS13, INTS14 and INTS15. The core complex associates with protein phosphatase 2A subunits PPP2CA and PPP2R1A, to form the Integrator-PP2A (INTAC) complex.

It is found in the nucleus. Its subcellular location is the chromosome. Its function is as follows. Component of the integrator complex, a multiprotein complex that terminates RNA polymerase II (Pol II) transcription in the promoter-proximal region of genes. The integrator complex provides a quality checkpoint during transcription elongation by driving premature transcription termination of transcripts that are unfavorably configured for transcriptional elongation: the complex terminates transcription by (1) catalyzing dephosphorylation of the C-terminal domain (CTD) of Pol II subunit POLR2A/RPB1 and SUPT5H/SPT5, (2) degrading the exiting nascent RNA transcript via endonuclease activity and (3) promoting the release of Pol II from bound DNA. The integrator complex is also involved in terminating the synthesis of non-coding Pol II transcripts, such as enhancer RNAs (eRNAs), small nuclear RNAs (snRNAs), telomerase RNAs and long non-coding RNAs (lncRNAs). Within the integrator complex, INTS6 acts as a molecular adapter that promotes assembly of protein phosphatase 2A (PP2A) subunits to the integrator core complex, promoting recruitment of PP2A to transcription pause-release checkpoint. The chain is Integrator complex subunit 6 (ints6l) from Danio rerio (Zebrafish).